We begin with the raw amino-acid sequence, 275 residues long: tRNA pseudouridine synthase A (275 aa).

D60 functions as the Nucleophile in the catalytic mechanism. Y119 contributes to the substrate binding site.

The protein belongs to the tRNA pseudouridine synthase TruA family. As to quaternary structure, homodimer.

The catalysed reaction is uridine(38/39/40) in tRNA = pseudouridine(38/39/40) in tRNA. In terms of biological role, formation of pseudouridine at positions 38, 39 and 40 in the anticodon stem and loop of transfer RNAs. In Synechocystis sp. (strain ATCC 27184 / PCC 6803 / Kazusa), this protein is tRNA pseudouridine synthase A.